The following is a 364-amino-acid chain: Appendage-associated protein (364 aa).

Coiled coils occupy residues 142 to 196 (IIHE…AECR) and 288 to 313 (RIAQAELAAAADALKRAADKLQALGK).

Its subcellular location is the secreted. Associates with actin filament appendages that are formed in the inclusion appendages of the parasitophorous vacuole during infection of the host erythrocyte. The polypeptide is Appendage-associated protein (Anaplasma marginale (strain Illinois)).